A 252-amino-acid polypeptide reads, in one-letter code: 5-oxoprolinase subunit A (252 aa).

It belongs to the LamB/PxpA family. As to quaternary structure, forms a complex composed of PxpA, PxpB and PxpC.

It carries out the reaction 5-oxo-L-proline + ATP + 2 H2O = L-glutamate + ADP + phosphate + H(+). Catalyzes the cleavage of 5-oxoproline to form L-glutamate coupled to the hydrolysis of ATP to ADP and inorganic phosphate. This Mycolicibacterium paratuberculosis (strain ATCC BAA-968 / K-10) (Mycobacterium paratuberculosis) protein is 5-oxoprolinase subunit A.